A 432-amino-acid chain; its full sequence is Serine--tRNA ligase (432 aa).

230 to 232 (TAE) contacts L-serine. 261-263 (RSE) contacts ATP. Residue glutamate 284 participates in L-serine binding. An ATP-binding site is contributed by 348 to 351 (EVSS). Serine 383 is an L-serine binding site.

The protein belongs to the class-II aminoacyl-tRNA synthetase family. Type-1 seryl-tRNA synthetase subfamily. In terms of assembly, homodimer. The tRNA molecule binds across the dimer.

The protein localises to the cytoplasm. It catalyses the reaction tRNA(Ser) + L-serine + ATP = L-seryl-tRNA(Ser) + AMP + diphosphate + H(+). The catalysed reaction is tRNA(Sec) + L-serine + ATP = L-seryl-tRNA(Sec) + AMP + diphosphate + H(+). The protein operates within aminoacyl-tRNA biosynthesis; selenocysteinyl-tRNA(Sec) biosynthesis; L-seryl-tRNA(Sec) from L-serine and tRNA(Sec): step 1/1. Catalyzes the attachment of serine to tRNA(Ser). Is also able to aminoacylate tRNA(Sec) with serine, to form the misacylated tRNA L-seryl-tRNA(Sec), which will be further converted into selenocysteinyl-tRNA(Sec). The sequence is that of Serine--tRNA ligase from Limosilactobacillus fermentum (strain NBRC 3956 / LMG 18251) (Lactobacillus fermentum).